We begin with the raw amino-acid sequence, 1481 residues long: Cystic fibrosis transmembrane conductance regulator (1481 aa).

Residues methionine 1–phenylalanine 77 are Cytoplasmic-facing. Residues phenylalanine 78–glutamine 98 form a helical membrane-spanning segment. The ABC transmembrane type-1 1 domain occupies phenylalanine 81 to leucine 365. The Extracellular portion of the chain corresponds to proline 99–tyrosine 122. A helical membrane pass occupies residues leucine 123–histidine 146. Over histidine 147–leucine 195 the chain is Cytoplasmic. The helical transmembrane segment at alanine 196 to tryptophan 216 threads the bilayer. The Extracellular portion of the chain corresponds to glutamate 217–serine 222. Residues alanine 223 to methionine 243 form a helical membrane-spanning segment. The Cytoplasmic portion of the chain corresponds to methionine 244–lysine 298. The helical transmembrane segment at alanine 299–phenylalanine 319 threads the bilayer. The Extracellular segment spans residues leucine 320–threonine 339. A helical membrane pass occupies residues isoleucine 340 to valine 358. The Cytoplasmic segment spans residues glutamine 359 to serine 858. ATP contacts are provided by residues tryptophan 401, serine 434, glycine 458–threonine 465, and glutamine 493. Residues asparagine 423 to glycine 646 form the ABC transporter 1 domain. Cysteine 524 carries S-palmitoyl cysteine lipidation. Phosphoserine is present on residues serine 549 and serine 660. A disordered R region region spans residues serine 654–glutamate 831. A Phosphoserine; by PKA modification is found at serine 670. Serine 686 carries the post-translational modification Phosphoserine. Lysine 688 is covalently cross-linked (Glycyl lysine isopeptide (Lys-Gly) (interchain with G-Cter in ubiquitin)). 2 positions are modified to phosphoserine: serine 700 and serine 712. Position 717 is a phosphothreonine (threonine 717). A phosphoserine mark is found at serine 737, serine 753, serine 768, serine 790, serine 795, and serine 813. The chain crosses the membrane as a helical span at residues leucine 859–valine 879. One can recognise an ABC transmembrane type-1 2 domain in the interval leucine 859–serine 1155. Residues valine 880–isoleucine 918 are Extracellular-facing. 2 N-linked (GlcNAc...) asparagine glycosylation sites follow: asparagine 894 and asparagine 900. Residues tyrosine 919–histidine 939 form a discontinuously helical membrane-spanning segment. The Cytoplasmic segment spans residues threonine 940 to threonine 990. Residues isoleucine 991–leucine 1011 form a helical membrane-spanning segment. The Extracellular segment spans residues glutamine 1012 to proline 1013. A helical membrane pass occupies residues tyrosine 1014 to leucine 1034. The Cytoplasmic portion of the chain corresponds to glutamine 1035–threonine 1095. Residues leucine 1096 to phenylalanine 1116 form a helical membrane-spanning segment. Residues isoleucine 1117–glycine 1130 are Extracellular-facing. The chain crosses the membrane as a helical span at residues isoleucine 1131–isoleucine 1151. Over aspartate 1152–leucine 1481 the chain is Cytoplasmic. Residues methionine 1211–proline 1444 enclose the ABC transporter 2 domain. ATP is bound by residues tyrosine 1220 and glycine 1245–serine 1252. The interval arginine 1387 to leucine 1481 is interaction with GORASP2. The S-palmitoyl cysteine moiety is linked to residue cysteine 1396. A phosphoserine mark is found at serine 1445 and serine 1457. The tract at residues glutamine 1462–leucine 1481 is disordered. Over residues glutamate 1471–leucine 1481 the composition is skewed to acidic residues. A PDZ-binding motif is present at residues threonine 1479–leucine 1481.

It belongs to the ABC transporter superfamily. ABCC family. CFTR transporter (TC 3.A.1.202) subfamily. Monomer; does not require oligomerization for channel activity. May form oligomers in the membrane. Interacts with SLC26A3, SLC26A6 and NHERF1. Interacts with SHANK2. Interacts with MYO6. Interacts (via C-terminus) with GOPC (via PDZ domain); this promotes CFTR internalization and thereby decreases channel activity. Interacts with SLC4A7 through NHERF1. Found in a complex with MYO5B and RAB11A. Interacts with ANO1. Interacts with SLC26A8. Interacts with AHCYL1; the interaction increases CFTR activity. Interacts with CSE1L. The core-glycosylated form interacts with GORASP2 (via PDZ GRASP-type 1 domain) in respone to ER stress. Interacts with MARCHF2; the interaction leads to CFTR ubiqtuitination and degradation. Interacts with ADGRG2. N-glycosylated. In terms of processing, phosphorylated; cAMP treatment promotes phosphorylation and activates the channel. Dephosphorylation decreases the ATPase activity (in vitro). Phosphorylation at PKA sites activates the channel. Phosphorylation at PKC sites enhances the response to phosphorylation by PKA. Phosphorylated by AMPK; this inhibits channel activity. Post-translationally, ubiquitinated, leading to its degradation in the lysosome. Deubiquitination by USP10 in early endosomes enhances its endocytic recycling to the cell membrane. Ubiquitinated by RNF185 during ER stress. Ubiquitinated by MARCHF2.

The protein localises to the apical cell membrane. The protein resides in the early endosome membrane. It is found in the cell membrane. It localises to the recycling endosome membrane. Its subcellular location is the endoplasmic reticulum membrane. The protein localises to the nucleus. The enzyme catalyses ATP + H2O + closed Cl(-) channel = ADP + phosphate + open Cl(-) channel.. It catalyses the reaction chloride(in) = chloride(out). The catalysed reaction is hydrogencarbonate(in) = hydrogencarbonate(out). It carries out the reaction ATP + H2O = ADP + phosphate + H(+). Epithelial ion channel that plays an important role in the regulation of epithelial ion and water transport and fluid homeostasis. Mediates the transport of chloride ions across the cell membrane. Possesses an intrinsic ATPase activity and utilizes ATP to gate its channel; the passive flow of anions through the channel is gated by cycles of ATP binding and hydrolysis by the ATP-binding domains. The ion channel is also permeable to HCO(3)(-); selectivity depends on the extracellular chloride concentration. Exerts its function also by modulating the activity of other ion channels and transporters. Contributes to the regulation of the pH and the ion content of the epithelial fluid layer. Modulates the activity of the epithelial sodium channel (ENaC) complex, in part by regulating the cell surface expression of the ENaC complex. May regulate bicarbonate secretion and salvage in epithelial cells by regulating the transporter SLC4A7. Can inhibit the chloride channel activity of ANO1. Plays a role in the chloride and bicarbonate homeostasis during sperm epididymal maturation and capacitation. The chain is Cystic fibrosis transmembrane conductance regulator from Chlorocebus aethiops (Green monkey).